The sequence spans 125 residues: Ribonuclease VapC19 (125 aa).

The 120-residue stretch at 3 to 122 folds into the PINc domain; the sequence is LIDTTIAVDH…RHFPMFPDLQ (120 aa). Mg(2+) is bound by residues D5 and D93.

The protein belongs to the PINc/VapC protein family. Mg(2+) is required as a cofactor.

Its function is as follows. Toxic component of a type II toxin-antitoxin (TA) system. An RNase. Its toxic effect is neutralized by coexpression with cognate antitoxin VapB19. The chain is Ribonuclease VapC19 from Mycobacterium tuberculosis (strain CDC 1551 / Oshkosh).